Reading from the N-terminus, the 857-residue chain is DNA mismatch repair protein MutS (857 aa).

621-628 (GPNMGGKS) provides a ligand contact to ATP.

It belongs to the DNA mismatch repair MutS family.

Its function is as follows. This protein is involved in the repair of mismatches in DNA. It is possible that it carries out the mismatch recognition step. This protein has a weak ATPase activity. This is DNA mismatch repair protein MutS from Francisella tularensis subsp. tularensis (strain SCHU S4 / Schu 4).